Here is a 311-residue protein sequence, read N- to C-terminus: tRNA-cytidine(32) 2-sulfurtransferase (311 aa).

The short motif at 47–52 (SGGKDS) is the PP-loop motif element. Residues C122, C125, and C213 each coordinate [4Fe-4S] cluster.

Belongs to the TtcA family. Homodimer. It depends on Mg(2+) as a cofactor. Requires [4Fe-4S] cluster as cofactor.

The protein resides in the cytoplasm. It catalyses the reaction cytidine(32) in tRNA + S-sulfanyl-L-cysteinyl-[cysteine desulfurase] + AH2 + ATP = 2-thiocytidine(32) in tRNA + L-cysteinyl-[cysteine desulfurase] + A + AMP + diphosphate + H(+). It participates in tRNA modification. Functionally, catalyzes the ATP-dependent 2-thiolation of cytidine in position 32 of tRNA, to form 2-thiocytidine (s(2)C32). The sulfur atoms are provided by the cysteine/cysteine desulfurase (IscS) system. In Salmonella choleraesuis (strain SC-B67), this protein is tRNA-cytidine(32) 2-sulfurtransferase.